The sequence spans 459 residues: Vacuolar fusion protein CCZ1 homolog (459 aa).

The protein belongs to the CCZ1 family.

The protein is Vacuolar fusion protein CCZ1 homolog of Nematostella vectensis (Starlet sea anemone).